A 260-amino-acid polypeptide reads, in one-letter code: Acetylglutamate kinase (260 aa).

Substrate-binding positions include 46–47 (GG), Arg68, and Asn160.

It belongs to the acetylglutamate kinase family. ArgB subfamily.

It localises to the cytoplasm. The catalysed reaction is N-acetyl-L-glutamate + ATP = N-acetyl-L-glutamyl 5-phosphate + ADP. The protein operates within amino-acid biosynthesis; L-arginine biosynthesis; N(2)-acetyl-L-ornithine from L-glutamate: step 2/4. Its function is as follows. Catalyzes the ATP-dependent phosphorylation of N-acetyl-L-glutamate. This chain is Acetylglutamate kinase, found in Shewanella denitrificans (strain OS217 / ATCC BAA-1090 / DSM 15013).